A 292-amino-acid polypeptide reads, in one-letter code: MSMPATSTKTTKLATSLIDEYALLGWRAMLTEVNLSPKPGLVDRINCGAHKDMALEDFHRSALAIQGWLPRFIEFGACSAEMAPEAVLHGLRPIGMACEGDMFRATAGVNTHKGSIFSLGLLCAAIGRLLQLNQPVTPTTVCSTAASFCRGLTDRELRTNNSQLTAGQRLYQQLGLTGARGEAEAGYPLVLNHALPHYLTLLDQGLDPELALLDTLLLLMAINGDTNVASRGGEGGLRWLQREAQTLLQKGGIRTPADLDYLRQFDRECIERNLSPGGSADLLILTWFLAQI.

It belongs to the CitG/MdcB family.

It carries out the reaction 3'-dephospho-CoA + ATP = 2'-(5''-triphospho-alpha-D-ribosyl)-3'-dephospho-CoA + adenine. In terms of biological role, catalyzes the formation of 2-(5''-triphosphoribosyl)-3'-dephosphocoenzyme-A, the precursor of the prosthetic group of the holo-acyl carrier protein (gamma chain) of citrate lyase, from ATP and dephospho-CoA. The protein is 2-(5''-triphosphoribosyl)-3'-dephosphocoenzyme-A synthase of Escherichia coli O139:H28 (strain E24377A / ETEC).